The sequence spans 505 residues: Trans-cinnamate 4-monooxygenase (505 aa).

Residues 3 to 23 traverse the membrane as a helical segment; sequence LLLLEKTLLALFLAAITAITI. Residues 213 to 218 and Ala-306 each bind (E)-cinnamate; that span reads RSRLAQ. Residue Cys-447 coordinates heme.

It belongs to the cytochrome P450 family. It depends on heme as a cofactor.

It localises to the membrane. It catalyses the reaction (E)-cinnamate + reduced [NADPH--hemoprotein reductase] + O2 = (E)-4-coumarate + oxidized [NADPH--hemoprotein reductase] + H2O + H(+). It functions in the pathway phenylpropanoid metabolism; trans-4-coumarate biosynthesis; trans-4-coumarate from trans-cinnamate: step 1/1. Its function is as follows. Catalyzes the first oxidative step of the phenylpropanoid pathway in higher plants by transforming trans-cinnamate into p-coumarate. The compounds formed by this pathway are essential components for lignification, pollination, and defense against ultraviolet light, predators and pathogens. The polypeptide is Trans-cinnamate 4-monooxygenase (CYP73A9) (Pisum sativum (Garden pea)).